A 469-amino-acid chain; its full sequence is UDP-N-acetylmuramate--L-alanine ligase (469 aa).

123–129 (GSHGKTT) contributes to the ATP binding site.

The protein belongs to the MurCDEF family.

The protein localises to the cytoplasm. The enzyme catalyses UDP-N-acetyl-alpha-D-muramate + L-alanine + ATP = UDP-N-acetyl-alpha-D-muramoyl-L-alanine + ADP + phosphate + H(+). The protein operates within cell wall biogenesis; peptidoglycan biosynthesis. Its function is as follows. Cell wall formation. In Synechococcus sp. (strain CC9605), this protein is UDP-N-acetylmuramate--L-alanine ligase.